Reading from the N-terminus, the 216-residue chain is ATP-dependent Clp protease proteolytic subunit (216 aa).

The active-site Nucleophile is the Ser120. Residue His145 is part of the active site.

This sequence belongs to the peptidase S14 family. Fourteen ClpP subunits assemble into 2 heptameric rings which stack back to back to give a disk-like structure with a central cavity, resembling the structure of eukaryotic proteasomes.

Its subcellular location is the cytoplasm. The catalysed reaction is Hydrolysis of proteins to small peptides in the presence of ATP and magnesium. alpha-casein is the usual test substrate. In the absence of ATP, only oligopeptides shorter than five residues are hydrolyzed (such as succinyl-Leu-Tyr-|-NHMec, and Leu-Tyr-Leu-|-Tyr-Trp, in which cleavage of the -Tyr-|-Leu- and -Tyr-|-Trp bonds also occurs).. Cleaves peptides in various proteins in a process that requires ATP hydrolysis. Has a chymotrypsin-like activity. Plays a major role in the degradation of misfolded proteins. The chain is ATP-dependent Clp protease proteolytic subunit from Cupriavidus necator (strain ATCC 17699 / DSM 428 / KCTC 22496 / NCIMB 10442 / H16 / Stanier 337) (Ralstonia eutropha).